A 361-amino-acid chain; its full sequence is Chorismate synthase (361 aa).

R48 and R54 together coordinate NADP(+). Residues 125–127, 238–239, G278, 293–297, and R319 each bind FMN; these read RSS, NA, and KPTSS.

The protein belongs to the chorismate synthase family. Homotetramer. FMNH2 serves as cofactor.

It catalyses the reaction 5-O-(1-carboxyvinyl)-3-phosphoshikimate = chorismate + phosphate. It participates in metabolic intermediate biosynthesis; chorismate biosynthesis; chorismate from D-erythrose 4-phosphate and phosphoenolpyruvate: step 7/7. Functionally, catalyzes the anti-1,4-elimination of the C-3 phosphate and the C-6 proR hydrogen from 5-enolpyruvylshikimate-3-phosphate (EPSP) to yield chorismate, which is the branch point compound that serves as the starting substrate for the three terminal pathways of aromatic amino acid biosynthesis. This reaction introduces a second double bond into the aromatic ring system. This is Chorismate synthase from Sodalis glossinidius (strain morsitans).